Here is a 386-residue protein sequence, read N- to C-terminus: Bifunctional desaturase/conjugase FADX (386 aa).

The interval 1 to 28 (MGAGGRMSVAPNNSKCEKKESRSVKRVP) is disordered. Transmembrane regions (helical) follow at residues 65–85 (LSFIFYSIATTYFHLLPSPIT) and 87–107 (IAWPVYWAFQGCILTSVWVLG). The Histidine box-1 signature appears at 108–112 (HECGH). The Histidine box-2 signature appears at 144 to 148 (HRRHH). A run of 3 helical transmembrane segments spans residues 182 to 202 (ALTLVATLFIGWPLYLAFNVS), 228 to 248 (IYISDAMIFVAAYVLYKIAMA), and 250 to 270 (GLAWLVCIYGVPLLIVNALVV). The short motif at 318 to 322 (HVIHH) is the Histidine box-3 element.

It belongs to the fatty acid desaturase type 1 family. As to expression, expressed exclusively in developing seeds.

It localises to the endoplasmic reticulum membrane. The catalysed reaction is a (9Z,12Z)-octadecadienoyl-containing glycerolipid + 2 Fe(II)-[cytochrome b5] + O2 + 2 H(+) = a (9Z,11E,13E)-octadecatrienoyl-containing glycerolipid + 2 Fe(III)-[cytochrome b5] + 2 H2O. It catalyses the reaction (9Z,12Z,15Z)-octadecatrienoyl-containing glycerolipid + 2 Fe(II)-[cytochrome b5] + O2 + 2 H(+) = a (9Z,11E,13E,15Z)-octadecatetraenoyl-containing glycerolipid + 2 Fe(III)-[cytochrome b5] + 2 H2O. The enzyme catalyses a (9Z)-octadecenoyl-containing glycerolipid + 2 Fe(II)-[cytochrome b5] + O2 + 2 H(+) = a (9Z,12E)-octadecadienoyl-containing glycerolipid + 2 Fe(III)-[cytochrome b5] + 2 H2O. It carries out the reaction a (9Z)-hexadecenoyl-containing glycerolipid + 2 Fe(II)-[cytochrome b5] + O2 + 2 H(+) = a (9Z,12E)-hexadecadienoyl-containing glycerolipid + 2 Fe(III)-[cytochrome b5] + 2 H2O. Its pathway is lipid metabolism; polyunsaturated fatty acid biosynthesis. Its function is as follows. Converts linoleic acid to alpha-eleostearic acid (18:3(9Z,11E,13E)) and alpha-linolenic acid to alpha-parinaric acid (18:4(9Z,11E,13E,15Z)). Converts a single cis double bond at carbon 12 to two conjugated trans bonds at positions 11 and 13. Can also act as a 12(E) desaturase when acting on the monounsaturated fatty acids oleate and palmitoleate, stereoselectively introducing a trans double bond. The chain is Bifunctional desaturase/conjugase FADX from Vernicia fordii (Tung).